Reading from the N-terminus, the 787-residue chain is Lysine-specific demethylase JMJ13 (787 aa).

The JmjN domain maps to 103–144 (CPVYRPTKEEFEDPLTYLQKIFPEASKYGICKIVSPLTATVP). The region spanning 250–420 (SSKWNLNKVS…FGAIASCRYA (171 aa)) is the JmjC domain. The Fe cation site is built by H293, E295, and H388. Zn(2+)-binding residues include C500, C503, C514, C516, H519, C522, H525, and C534. The segment at 500-551 (CSLCKRDCYLAFINCECYSHPVCLRHDVKKLDLPCGTTHTLYLRDNIEDMEA) adopts a C4HCHC zinc-finger fold. The segment at 500–551 (CSLCKRDCYLAFINCECYSHPVCLRHDVKKLDLPCGTTHTLYLRDNIEDMEA) adopts a C5HC2 zinc-finger fold. The 59-residue stretch at 617-675 (VMSYEANASCISSVADDYECSDYVNRRANCSSSSDSKLSEEVACSSSKKTRFFPVVQDE) folds into the FYR N-terminal domain. Residues 677–756 (LVADQESDGS…ELVISNRKET (80 aa)) enclose the FYR C-terminal domain. The disordered stretch occupies residues 712–769 (ESDHHQELKRLKKSHHHEGRYSSSSSVSRQEEEEDELVISNRKETQQQSDVKMQKKRI). The Nuclear localization signal motif lies at 752–759 (NRKETQQQ).

This sequence belongs to the JARID1 histone demethylase family. Requires Fe(2+) as cofactor. In terms of tissue distribution, mostly expressed in leaves, and, to a lower extent, in inflorescences, roots, siliques and stems.

The protein localises to the nucleus. It carries out the reaction N(6),N(6),N(6)-trimethyl-L-lysyl(27)-[histone H3] + 2-oxoglutarate + O2 = N(6),N(6)-dimethyl-L-lysyl(27)-[histone H3] + formaldehyde + succinate + CO2. In terms of biological role, histone demethylase that demethylates 'Lys-27' (H3K27me) of histone H3 with a specific activity for H3K27me3 and involved in the regulation of gene expression. Acts as a temperature and photoperiod dependent flowering repressor. In Arabidopsis thaliana (Mouse-ear cress), this protein is Lysine-specific demethylase JMJ13.